Consider the following 131-residue polypeptide: Small ribosomal subunit protein eS24 (131 aa).

Positions 93–131 (RHGLYEKKKTSRKQRKERKNRMKKVRGTKKASVGAAGKK) are disordered. Positions 101 to 121 (KTSRKQRKERKNRMKKVRGTK) are enriched in basic residues.

It belongs to the eukaryotic ribosomal protein eS24 family. As to quaternary structure, component of the small ribosomal subunit. Part of the small subunit (SSU) processome, composed of more than 70 proteins and the RNA chaperone small nucleolar RNA (snoRNA) U3.

The protein resides in the cytoplasm. Its subcellular location is the nucleus. It localises to the nucleolus. Functionally, component of the small ribosomal subunit. The ribosome is a large ribonucleoprotein complex responsible for the synthesis of proteins in the cell. Required for processing of pre-rRNA and maturation of 40S ribosomal subunits. Part of the small subunit (SSU) processome, first precursor of the small eukaryotic ribosomal subunit. During the assembly of the SSU processome in the nucleolus, many ribosome biogenesis factors, an RNA chaperone and ribosomal proteins associate with the nascent pre-rRNA and work in concert to generate RNA folding, modifications, rearrangements and cleavage as well as targeted degradation of pre-ribosomal RNA by the RNA exosome. This chain is Small ribosomal subunit protein eS24 (rps24), found in Ictalurus punctatus (Channel catfish).